A 326-amino-acid chain; its full sequence is Phospho-N-acetylmuramoyl-pentapeptide-transferase (326 aa).

A run of 9 helical transmembrane segments spans residues 3–23, 51–71, 79–99, 115–135, 138–158, 169–189, 195–215, 221–243, and 304–324; these read ISIS…PAFI, TMGG…VALF, VGMI…DDFL, LALQ…GGDM, IFGY…FWLV, GIDG…GVIA, MDIL…FVFN, VFMG…MALH, and VDFF…AILY.

Belongs to the glycosyltransferase 4 family. MraY subfamily. Mg(2+) serves as cofactor.

Its subcellular location is the cell membrane. It carries out the reaction UDP-N-acetyl-alpha-D-muramoyl-L-alanyl-gamma-D-glutamyl-L-lysyl-D-alanyl-D-alanine + di-trans,octa-cis-undecaprenyl phosphate = Mur2Ac(oyl-L-Ala-gamma-D-Glu-L-Lys-D-Ala-D-Ala)-di-trans,octa-cis-undecaprenyl diphosphate + UMP. It functions in the pathway cell wall biogenesis; peptidoglycan biosynthesis. Functionally, catalyzes the initial step of the lipid cycle reactions in the biosynthesis of the cell wall peptidoglycan: transfers peptidoglycan precursor phospho-MurNAc-pentapeptide from UDP-MurNAc-pentapeptide onto the lipid carrier undecaprenyl phosphate, yielding undecaprenyl-pyrophosphoryl-MurNAc-pentapeptide, known as lipid I. This is Phospho-N-acetylmuramoyl-pentapeptide-transferase from Streptococcus pneumoniae (strain Hungary19A-6).